Reading from the N-terminus, the 57-residue chain is Orphan toxin OrtT (57 aa).

2 helical membrane passes run 6-26 and 34-54; these read HMLV…WFLS and FLSA…ALLF.

Belongs to the GhoT/OrtT toxin family.

It is found in the cell inner membrane. In terms of biological role, acts as an orphan toxin which is important for maintaining cell fitness during stress related to the stringent response. Increases the formation of persister cells. Has no known antitoxin. The polypeptide is Orphan toxin OrtT (Escherichia coli O6:H1 (strain CFT073 / ATCC 700928 / UPEC)).